The following is a 259-amino-acid chain: Deoxyribose-phosphate aldolase (259 aa).

Catalysis depends on D102, which acts as the Proton donor/acceptor. K167 (schiff-base intermediate with acetaldehyde) is an active-site residue. The active-site Proton donor/acceptor is the K201.

Belongs to the DeoC/FbaB aldolase family. DeoC type 2 subfamily.

It is found in the cytoplasm. The catalysed reaction is 2-deoxy-D-ribose 5-phosphate = D-glyceraldehyde 3-phosphate + acetaldehyde. It participates in carbohydrate degradation; 2-deoxy-D-ribose 1-phosphate degradation; D-glyceraldehyde 3-phosphate and acetaldehyde from 2-deoxy-alpha-D-ribose 1-phosphate: step 2/2. Catalyzes a reversible aldol reaction between acetaldehyde and D-glyceraldehyde 3-phosphate to generate 2-deoxy-D-ribose 5-phosphate. The chain is Deoxyribose-phosphate aldolase from Escherichia coli O45:K1 (strain S88 / ExPEC).